The sequence spans 334 residues: Probable fructose-bisphosphate aldolase class 1 (334 aa).

Belongs to the class I fructose-bisphosphate aldolase family.

It carries out the reaction beta-D-fructose 1,6-bisphosphate = D-glyceraldehyde 3-phosphate + dihydroxyacetone phosphate. It participates in carbohydrate degradation; glycolysis; D-glyceraldehyde 3-phosphate and glycerone phosphate from D-glucose: step 4/4. This is Probable fructose-bisphosphate aldolase class 1 from Xylella fastidiosa (strain 9a5c).